We begin with the raw amino-acid sequence, 68 residues long: DNA-directed RNA polymerase subunit omega (68 aa).

It belongs to the RNA polymerase subunit omega family. In terms of assembly, the RNAP catalytic core consists of 2 alpha, 1 beta, 1 beta' and 1 omega subunit. When a sigma factor is associated with the core the holoenzyme is formed, which can initiate transcription.

It carries out the reaction RNA(n) + a ribonucleoside 5'-triphosphate = RNA(n+1) + diphosphate. Functionally, promotes RNA polymerase assembly. Latches the N- and C-terminal regions of the beta' subunit thereby facilitating its interaction with the beta and alpha subunits. The sequence is that of DNA-directed RNA polymerase subunit omega from Neisseria gonorrhoeae (strain NCCP11945).